We begin with the raw amino-acid sequence, 159 residues long: Neuroglobin-2 (159 aa).

Residues 3–151 form the Globin domain; the sequence is KLTEKDKELI…VVAAMSRGWA (149 aa). Positions 66 and 98 each coordinate heme b.

Belongs to the globin family. In terms of assembly, monomer. Homodimers and homotetramers. Mainly monomeric but also detected as part of homodimers and homotetramers.

The protein resides in the cytoplasm. Its subcellular location is the cytosol. The protein localises to the mitochondrion matrix. It carries out the reaction Fe(III)-heme b-[protein] + nitric oxide + H2O = Fe(II)-heme b-[protein] + nitrite + 2 H(+). In terms of biological role, monomeric globin with a bis-histidyl six-coordinate heme-iron atom through which it can bind dioxygen, carbon monoxide and nitric oxide. Could help transport oxygen and increase its availability to the metabolically active neuronal tissues, though its low quantity in tissues as well as its high affinity for dioxygen, which may limit its oxygen-releasing ability, argue against it. The ferrous/deoxygenated form exhibits a nitrite reductase activity and it could produce nitric oxide which in turn inhibits cellular respiration in response to hypoxia. In its ferrous/deoxygenated state, it may also exhibit GDI (Guanine nucleotide Dissociation Inhibitor) activity toward heterotrimeric G-alpha proteins, thereby regulating signal transduction to facilitate neuroprotective responses in the wake of hypoxia and associated oxidative stress. This is Neuroglobin-2 (ngb2) from Oncorhynchus mykiss (Rainbow trout).